A 92-amino-acid chain; its full sequence is Small nuclear ribonucleoprotein E (92 aa).

Residues 18-92 (INLIFRYLQN…NITLLQSVSN (75 aa)) enclose the Sm domain.

This sequence belongs to the snRNP Sm proteins family. As to quaternary structure, core component of the spliceosomal U1, U2, U4 and U5 small nuclear ribonucleoproteins (snRNPs), the building blocks of the spliceosome. Most spliceosomal snRNPs contain a common set of Sm proteins, SNRPB, SNRPD1, SNRPD2, SNRPD3, SNRPE, SNRPF and SNRPG that assemble in a heptameric protein ring on the Sm site of the small nuclear RNA to form the core snRNP. Component of the U1 snRNP. The U1 snRNP is composed of the U1 snRNA and the 7 core Sm proteins SNRPB, SNRPD1, SNRPD2, SNRPD3, SNRPE, SNRPF and SNRPG, and at least three U1 snRNP-specific proteins SNRNP70/U1-70K, SNRPA/U1-A and SNRPC/U1-C. Component of the U4/U6-U5 tri-snRNP complex composed of the U4, U6 and U5 snRNAs and at least PRPF3, PRPF4, PRPF6, PRPF8, PRPF31, SNRNP200, TXNL4A, SNRNP40, SNRPB, SNRPD1, SNRPD2, SNRPD3, SNRPE, SNRPF, SNRPG, DDX23, CD2BP2, PPIH, SNU13, EFTUD2, SART1 and USP39, plus LSM2, LSM3, LSM4, LSM5, LSM6, LSM7 and LSM8. Component of the U7 snRNP complex, or U7 Sm protein core complex, that is composed of the U7 snRNA and at least LSM10, LSM11, SNRPB, SNRPD3, SNRPE, SNRPF and SNRPG; the complex does not contain SNRPD1 and SNRPD2. Component of the minor spliceosome, which splices U12-type introns. Part of the SMN-Sm complex that contains SMN1, GEMIN2/SIP1, DDX20/GEMIN3, GEMIN4, GEMIN5, GEMIN6, GEMIN7, GEMIN8, STRAP/UNRIP and the Sm proteins SNRPB, SNRPD1, SNRPD2, SNRPD3, SNRPE, SNRPF and SNRPG; catalyzes core snRNPs assembly. Forms a 6S pICln-Sm complex composed of CLNS1A/pICln, SNRPD1, SNRPD2, SNRPE, SNRPF and SNRPG; ring-like structure where CLNS1A/pICln mimics additional Sm proteins and which is unable to assemble into the core snRNP. Interacts with SMN1; the interaction is direct. Interacts with GEMIN2 (via N-terminus); the interaction is direct. Interacts with SNRPF; the interaction is direct. Interacts with SNRPG; the interaction is direct.

It localises to the cytoplasm. Its subcellular location is the cytosol. The protein resides in the nucleus. Plays a role in pre-mRNA splicing as a core component of the spliceosomal U1, U2, U4 and U5 small nuclear ribonucleoproteins (snRNPs), the building blocks of the spliceosome. Component of both the pre-catalytic spliceosome B complex and activated spliceosome C complexes. As a component of the minor spliceosome, involved in the splicing of U12-type introns in pre-mRNAs. As part of the U7 snRNP it is involved in histone 3'-end processing. This is Small nuclear ribonucleoprotein E (SNRPE) from Bos taurus (Bovine).